Reading from the N-terminus, the 134-residue chain is MKKTAVLNSHISSAISTLGHYDLLTINDAGMPIPNDDKRIDLAVTKSLPRFIDVLETVLTEMEIQKVYLAEEIKTANAQQLKAIKKLINDDVEIKFIAHSEMKEMLKSPLNKGNIRTGEITPFSNIILESNVTF.

His-20 functions as the Proton donor in the catalytic mechanism. Residues Asp-28, His-99, and Phe-123 to Asn-125 each bind substrate.

It belongs to the RbsD / FucU family. RbsD subfamily. As to quaternary structure, homodecamer.

It localises to the cytoplasm. It catalyses the reaction beta-D-ribopyranose = beta-D-ribofuranose. The protein operates within carbohydrate metabolism; D-ribose degradation; D-ribose 5-phosphate from beta-D-ribopyranose: step 1/2. Functionally, catalyzes the interconversion of beta-pyran and beta-furan forms of D-ribose. The sequence is that of D-ribose pyranase from Staphylococcus epidermidis (strain ATCC 12228 / FDA PCI 1200).